We begin with the raw amino-acid sequence, 267 residues long: 4-hydroxy-tetrahydrodipicolinate reductase (267 aa).

Residues 8-13 (GAAGRM) and glutamate 34 contribute to the NAD(+) site. Residue arginine 35 participates in NADP(+) binding. NAD(+) contacts are provided by residues 98–100 (GST) and 122–125 (APNM). Catalysis depends on histidine 155, which acts as the Proton donor/acceptor. Histidine 156 serves as a coordination point for (S)-2,3,4,5-tetrahydrodipicolinate. The active-site Proton donor is the lysine 159. 165–166 (GT) lines the (S)-2,3,4,5-tetrahydrodipicolinate pocket.

This sequence belongs to the DapB family.

The protein localises to the cytoplasm. The enzyme catalyses (S)-2,3,4,5-tetrahydrodipicolinate + NAD(+) + H2O = (2S,4S)-4-hydroxy-2,3,4,5-tetrahydrodipicolinate + NADH + H(+). It catalyses the reaction (S)-2,3,4,5-tetrahydrodipicolinate + NADP(+) + H2O = (2S,4S)-4-hydroxy-2,3,4,5-tetrahydrodipicolinate + NADPH + H(+). The protein operates within amino-acid biosynthesis; L-lysine biosynthesis via DAP pathway; (S)-tetrahydrodipicolinate from L-aspartate: step 4/4. Its function is as follows. Catalyzes the conversion of 4-hydroxy-tetrahydrodipicolinate (HTPA) to tetrahydrodipicolinate. This chain is 4-hydroxy-tetrahydrodipicolinate reductase, found in Citrifermentans bemidjiense (strain ATCC BAA-1014 / DSM 16622 / JCM 12645 / Bem) (Geobacter bemidjiensis).